The chain runs to 97 residues: Aspartyl/glutamyl-tRNA(Asn/Gln) amidotransferase subunit C (97 aa).

This sequence belongs to the GatC family. In terms of assembly, heterotrimer of A, B and C subunits.

The enzyme catalyses L-glutamyl-tRNA(Gln) + L-glutamine + ATP + H2O = L-glutaminyl-tRNA(Gln) + L-glutamate + ADP + phosphate + H(+). It catalyses the reaction L-aspartyl-tRNA(Asn) + L-glutamine + ATP + H2O = L-asparaginyl-tRNA(Asn) + L-glutamate + ADP + phosphate + 2 H(+). Its function is as follows. Allows the formation of correctly charged Asn-tRNA(Asn) or Gln-tRNA(Gln) through the transamidation of misacylated Asp-tRNA(Asn) or Glu-tRNA(Gln) in organisms which lack either or both of asparaginyl-tRNA or glutaminyl-tRNA synthetases. The reaction takes place in the presence of glutamine and ATP through an activated phospho-Asp-tRNA(Asn) or phospho-Glu-tRNA(Gln). The chain is Aspartyl/glutamyl-tRNA(Asn/Gln) amidotransferase subunit C from Anaeromyxobacter dehalogenans (strain 2CP-C).